The following is a 71-amino-acid chain: DPSGSPHIRILPQETFEDICRLPSDSGDCLRFFEMWYFDGTTCTKFVYGGYGGNDNRFPTEKACMKRCAKA.

A signal peptide spans 1–22 (DPSGSPHIRILPQETFEDICRL). Disulfide bonds link Cys-20-Cys-68 and Cys-43-Cys-64. One can recognise a BPTI/Kunitz inhibitor domain in the interval 23 to 68 (PSDSGDCLRFFEMWYFDGTTCTKFVYGGYGGNDNRFPTEKACMKRC).

Belongs to the venom Kunitz-type family. 03 (sub-Kunitz) subfamily. In terms of tissue distribution, expressed by the venom gland.

It localises to the secreted. Its function is as follows. Serine protease inhibitor that inhibits trypsin at a molar ratio of 1:1. This chain is Kunitz-type serine protease inhibitor HNTX-852, found in Cyriopagopus hainanus (Chinese bird spider).